We begin with the raw amino-acid sequence, 963 residues long: Transcription factor cbf12 (963 aa).

2 disordered regions span residues 130–207 (NPSN…SQGL) and 248–289 (VNMN…PPQK). 2 stretches are compositionally biased toward polar residues: residues 143–207 (FENN…SQGL) and 249–289 (NMNS…PPQK).

The protein belongs to the Su(H) family.

The protein localises to the nucleus. Transcription factor which function may be to trigger the increase of adhesion at stationary phase, possibly by counteracting or replacing cbf11 at the respective promoters. May also play a cbf11-antagonistic role in the regulation of a number of other important processes such as extracellular material production, colony morphogenesis, ploidy maintenance, or meiosis. The sequence is that of Transcription factor cbf12 (cbf12) from Schizosaccharomyces pombe (strain 972 / ATCC 24843) (Fission yeast).